We begin with the raw amino-acid sequence, 413 residues long: CinA-like protein (413 aa).

It belongs to the CinA family.

In Geobacter metallireducens (strain ATCC 53774 / DSM 7210 / GS-15), this protein is CinA-like protein.